A 132-amino-acid chain; its full sequence is Large ribosomal subunit protein bL21 (132 aa).

The interval Ala112 to Ala132 is disordered.

Belongs to the bacterial ribosomal protein bL21 family. As to quaternary structure, part of the 50S ribosomal subunit. Contacts protein L20.

Its function is as follows. This protein binds to 23S rRNA in the presence of protein L20. The protein is Large ribosomal subunit protein bL21 of Dehalococcoides mccartyi (strain ATCC BAA-2266 / KCTC 15142 / 195) (Dehalococcoides ethenogenes (strain 195)).